Here is a 209-residue protein sequence, read N- to C-terminus: Guanylate kinase (209 aa).

Residues 9–188 enclose the Guanylate kinase-like domain; that stretch reads GIMLVMSSPS…SVQQIKSIFI (180 aa). Residue 16–23 coordinates ATP; the sequence is SPSGGGKT.

This sequence belongs to the guanylate kinase family.

The protein resides in the cytoplasm. It carries out the reaction GMP + ATP = GDP + ADP. In terms of biological role, essential for recycling GMP and indirectly, cGMP. The protein is Guanylate kinase of Ehrlichia ruminantium (strain Gardel).